The following is a 453-amino-acid chain: CCA-adding enzyme (453 aa).

ATP contacts are provided by serine 53 and lysine 56. CTP contacts are provided by serine 53 and lysine 56. Aspartate 65, aspartate 67, and aspartate 119 together coordinate Mg(2+). The ATP site is built by histidine 142, lysine 161, and tyrosine 170. CTP is bound by residues histidine 142, lysine 161, and tyrosine 170.

The protein belongs to the tRNA nucleotidyltransferase/poly(A) polymerase family. Archaeal CCA-adding enzyme subfamily. Homodimer. Mg(2+) is required as a cofactor.

It carries out the reaction a tRNA precursor + 2 CTP + ATP = a tRNA with a 3' CCA end + 3 diphosphate. It catalyses the reaction a tRNA with a 3' CCA end + 2 CTP + ATP = a tRNA with a 3' CCACCA end + 3 diphosphate. Its function is as follows. Catalyzes the addition and repair of the essential 3'-terminal CCA sequence in tRNAs without using a nucleic acid template. Adds these three nucleotides in the order of C, C, and A to the tRNA nucleotide-73, using CTP and ATP as substrates and producing inorganic pyrophosphate. tRNA 3'-terminal CCA addition is required both for tRNA processing and repair. Also involved in tRNA surveillance by mediating tandem CCA addition to generate a CCACCA at the 3' terminus of unstable tRNAs. While stable tRNAs receive only 3'-terminal CCA, unstable tRNAs are marked with CCACCA and rapidly degraded. This chain is CCA-adding enzyme, found in Pyrococcus furiosus (strain ATCC 43587 / DSM 3638 / JCM 8422 / Vc1).